The primary structure comprises 74 residues: Protein krueppel (74 aa).

C2H2-type zinc fingers lie at residues 1–4 (ERTH), 10–32 (FECPECHKRFTRDHHLKTHMRLH), 38–60 (YHCSHCDRQFVQVANLRRHLRVH), and 66–74 (YACELCDAR).

This sequence belongs to the krueppel C2H2-type zinc-finger protein family.

It is found in the nucleus. Functionally, krueppel is a gap class segmentation protein. The sequence is that of Protein krueppel (Kr) from Psychoda cinerea (Psychod fly).